The following is a 132-amino-acid chain: Ribonuclease P protein component (132 aa).

This sequence belongs to the RnpA family. As to quaternary structure, consists of a catalytic RNA component (M1 or rnpB) and a protein subunit.

It carries out the reaction Endonucleolytic cleavage of RNA, removing 5'-extranucleotides from tRNA precursor.. RNaseP catalyzes the removal of the 5'-leader sequence from pre-tRNA to produce the mature 5'-terminus. It can also cleave other RNA substrates such as 4.5S RNA. The protein component plays an auxiliary but essential role in vivo by binding to the 5'-leader sequence and broadening the substrate specificity of the ribozyme. The protein is Ribonuclease P protein component of Marinomonas sp. (strain MWYL1).